Consider the following 424-residue polypeptide: Dihydroorotase (424 aa).

Positions 61 and 63 each coordinate Zn(2+). Substrate is bound by residues 63-65 (HLR) and Asn-95. Zn(2+)-binding residues include Asp-153, His-180, and His-233. Position 279 (Asn-279) interacts with substrate. Asp-306 contacts Zn(2+). Residue Asp-306 is part of the active site. Residue His-310 participates in substrate binding.

It belongs to the metallo-dependent hydrolases superfamily. DHOase family. Class I DHOase subfamily. It depends on Zn(2+) as a cofactor.

The enzyme catalyses (S)-dihydroorotate + H2O = N-carbamoyl-L-aspartate + H(+). It functions in the pathway pyrimidine metabolism; UMP biosynthesis via de novo pathway; (S)-dihydroorotate from bicarbonate: step 3/3. In terms of biological role, catalyzes the reversible cyclization of carbamoyl aspartate to dihydroorotate. This is Dihydroorotase from Citrifermentans bemidjiense (strain ATCC BAA-1014 / DSM 16622 / JCM 12645 / Bem) (Geobacter bemidjiensis).